A 158-amino-acid chain; its full sequence is Transcription elongation factor GreA (158 aa).

The stretch at 53–73 forms a coiled coil; that stretch reads EQQGFIEGRIKEIEAKLSNAQ.

The protein belongs to the GreA/GreB family.

Necessary for efficient RNA polymerase transcription elongation past template-encoded arresting sites. The arresting sites in DNA have the property of trapping a certain fraction of elongating RNA polymerases that pass through, resulting in locked ternary complexes. Cleavage of the nascent transcript by cleavage factors such as GreA or GreB allows the resumption of elongation from the new 3'terminus. GreA releases sequences of 2 to 3 nucleotides. The polypeptide is Transcription elongation factor GreA (Thioalkalivibrio sulfidiphilus (strain HL-EbGR7)).